The primary structure comprises 196 residues: Nucleoid occlusion factor SlmA (196 aa).

The HTH tetR-type domain maps to 7–68 (PNRRDEILQA…GLIEFIEESI (62 aa)). A DNA-binding region (H-T-H motif) is located at residues 31–50 (TTAKLAKQVGVSEAALYRHF). Residues 71–93 (RVNRILEDEKDTLKRIELLLKLL) are a coiled coil.

It belongs to the nucleoid occlusion factor SlmA family. As to quaternary structure, homodimer. Interacts with FtsZ.

It localises to the cytoplasm. It is found in the nucleoid. Required for nucleoid occlusion (NO) phenomenon, which prevents Z-ring formation and cell division over the nucleoid. Acts as a DNA-associated cell division inhibitor that binds simultaneously chromosomal DNA and FtsZ, and disrupts the assembly of FtsZ polymers. SlmA-DNA-binding sequences (SBS) are dispersed on non-Ter regions of the chromosome, preventing FtsZ polymerization at these regions. This chain is Nucleoid occlusion factor SlmA, found in Aliivibrio fischeri (strain MJ11) (Vibrio fischeri).